The following is a 669-amino-acid chain: tRNA 5-methylaminomethyl-2-thiouridine biosynthesis bifunctional protein MnmC (669 aa).

The interval 1–246 (MIKNANIHFN…KRSMLIGTLK (246 aa)) is tRNA (mnm(5)s(2)U34)-methyltransferase. The interval 271–669 (IGGGIASSCI…IVRDLIRNKI (399 aa)) is FAD-dependent cmnm(5)s(2)U34 oxidoreductase.

The protein in the N-terminal section; belongs to the methyltransferase superfamily. tRNA (mnm(5)s(2)U34)-methyltransferase family. In the C-terminal section; belongs to the DAO family. It depends on FAD as a cofactor.

The protein localises to the cytoplasm. It carries out the reaction 5-aminomethyl-2-thiouridine(34) in tRNA + S-adenosyl-L-methionine = 5-methylaminomethyl-2-thiouridine(34) in tRNA + S-adenosyl-L-homocysteine + H(+). Functionally, catalyzes the last two steps in the biosynthesis of 5-methylaminomethyl-2-thiouridine (mnm(5)s(2)U) at the wobble position (U34) in tRNA. Catalyzes the FAD-dependent demodification of cmnm(5)s(2)U34 to nm(5)s(2)U34, followed by the transfer of a methyl group from S-adenosyl-L-methionine to nm(5)s(2)U34, to form mnm(5)s(2)U34. This is tRNA 5-methylaminomethyl-2-thiouridine biosynthesis bifunctional protein MnmC from Pseudoalteromonas translucida (strain TAC 125).